The following is a 117-amino-acid chain: Large ribosomal subunit protein bL20 (117 aa).

It belongs to the bacterial ribosomal protein bL20 family.

Functionally, binds directly to 23S ribosomal RNA and is necessary for the in vitro assembly process of the 50S ribosomal subunit. It is not involved in the protein synthesizing functions of that subunit. In Rickettsia africae (strain ESF-5), this protein is Large ribosomal subunit protein bL20.